A 530-amino-acid chain; its full sequence is Retinoic acid-induced protein 2 (530 aa).

Positions 1–13 are enriched in polar residues; it reads MDDLQSQNLSMDM. The disordered stretch occupies residues 1 to 22; sequence MDDLQSQNLSMDMTDSPPALAN.

The polypeptide is Retinoic acid-induced protein 2 (RAI2) (Homo sapiens (Human)).